The following is a 217-amino-acid chain: Small ribosomal subunit protein uS3 (217 aa).

Residues Ile38–Lys106 enclose the KH type-2 domain.

Belongs to the universal ribosomal protein uS3 family. Part of the 30S ribosomal subunit. Forms a tight complex with proteins S10 and S14.

Its function is as follows. Binds the lower part of the 30S subunit head. Binds mRNA in the 70S ribosome, positioning it for translation. In Streptococcus pneumoniae serotype 19F (strain G54), this protein is Small ribosomal subunit protein uS3.